The primary structure comprises 354 residues: Putative [LysW]-L-2-aminoadipate/[LysW]-L-glutamate phosphate reductase (354 aa).

NADP(+)-binding positions include Ser-10–Ile-13 and Ser-34–Arg-36. Residue Cys-153 is part of the active site. An NADP(+)-binding site is contributed by Asn-321.

It belongs to the NAGSA dehydrogenase family. Type 1 subfamily. LysY sub-subfamily.

The protein resides in the cytoplasm. It catalyses the reaction [amino-group carrier protein]-C-terminal-N-(1-carboxy-5-oxopentan-1-yl)-L-glutamine + phosphate + NADP(+) = [amino-group carrier protein]-C-terminal-N-(1-carboxy-5-phosphooxy-5-oxopentan-1-yl)-L-glutamine + NADPH + H(+). The enzyme catalyses [amino-group carrier protein]-C-terminal-gamma-(L-glutamyl-5-semialdehyde)-L-glutamate + phosphate + NADP(+) = [amino-group carrier protein]-C-terminal-gamma-(5-phospho-L-glutamyl)-L-glutamate + NADPH + H(+). Its pathway is amino-acid biosynthesis; L-lysine biosynthesis via AAA pathway; L-lysine from L-alpha-aminoadipate (Thermus route): step 3/5. It functions in the pathway amino-acid biosynthesis; L-arginine biosynthesis. In terms of biological role, involved in both the arginine and lysine biosynthetic pathways. In Caldivirga maquilingensis (strain ATCC 700844 / DSM 13496 / JCM 10307 / IC-167), this protein is Putative [LysW]-L-2-aminoadipate/[LysW]-L-glutamate phosphate reductase.